Consider the following 420-residue polypeptide: Glutamyl-tRNA reductase (420 aa).

Residues 49-52, S109, 114-116, and Q120 each bind substrate; these read TCNR and EPQ. The Nucleophile role is filled by C50. 189-194 provides a ligand contact to NADP(+); that stretch reads GAGETI.

The protein belongs to the glutamyl-tRNA reductase family. As to quaternary structure, homodimer.

It carries out the reaction (S)-4-amino-5-oxopentanoate + tRNA(Glu) + NADP(+) = L-glutamyl-tRNA(Glu) + NADPH + H(+). It participates in porphyrin-containing compound metabolism; protoporphyrin-IX biosynthesis; 5-aminolevulinate from L-glutamyl-tRNA(Glu): step 1/2. Catalyzes the NADPH-dependent reduction of glutamyl-tRNA(Glu) to glutamate 1-semialdehyde (GSA). This chain is Glutamyl-tRNA reductase, found in Serratia proteamaculans (strain 568).